Reading from the N-terminus, the 612-residue chain is Cyclin-dependent kinase G1 (612 aa).

Basic and acidic residues predominate over residues 26–54 (SRDVYVRQSGRDDERRQIKRPSDHDLRRN). Disordered stretches follow at residues 26-60 (SRDV…RHRS) and 239-278 (CYSS…EDQD). In terms of domain architecture, Protein kinase spans 297 to 593 (FQKLNKINEG…VEDALNHGWF (297 aa)). ATP-binding positions include 303 to 311 (INEGTYGIV) and Lys-326. Tyr-308 is subject to Phosphotyrosine. The active-site Proton acceptor is Asp-426. Ser-453 carries the phosphoserine modification. Thr-459 bears the Phosphothreonine mark.

It belongs to the protein kinase superfamily. Ser/Thr protein kinase family. As to quaternary structure, forms a complex with CYCL1-1. Associated with the spliceosome. Interacts with RS2Z33. Expressed in leaves and inflorescences. Lower levels of expression in roots and stems.

It is found in the nucleus speckle. It carries out the reaction L-seryl-[protein] + ATP = O-phospho-L-seryl-[protein] + ADP + H(+). The enzyme catalyses L-threonyl-[protein] + ATP = O-phospho-L-threonyl-[protein] + ADP + H(+). In terms of biological role, cyclin-dependent kinase involved in pre-mRNA splicing. Required for the correct splicing of the sixth intron of CALS5 pre-mRNA. May stabilize the binding of U1 snRNP to this rare type of intron with a GC 5'SS. Involved in chromosome pairing and is required for the completion of synapsis in male meiocytes at high ambient temperatures. This is Cyclin-dependent kinase G1 (CDKG1) from Arabidopsis thaliana (Mouse-ear cress).